The primary structure comprises 276 residues: Small ribosomal subunit protein uS3 (276 aa).

Positions 43–111 constitute a KH type-2 domain; the sequence is IRQLMSTGME…QVQLNILEVK (69 aa). Positions 218 to 227 are enriched in low complexity; it reads AQAASAPSRG. The segment at 218 to 276 is disordered; it reads AQAASAPSRGPRSDRGGRPGGADRGDRRRRNDRPAADAAPAAEAPAVEAAPAAAEGGQA. Over residues 228–243 the composition is skewed to basic and acidic residues; sequence PRSDRGGRPGGADRGD. The segment covering 253–276 has biased composition (low complexity); sequence ADAAPAAEAPAVEAAPAAAEGGQA.

The protein belongs to the universal ribosomal protein uS3 family. In terms of assembly, part of the 30S ribosomal subunit. Forms a tight complex with proteins S10 and S14.

Binds the lower part of the 30S subunit head. Binds mRNA in the 70S ribosome, positioning it for translation. The sequence is that of Small ribosomal subunit protein uS3 from Pseudarthrobacter chlorophenolicus (strain ATCC 700700 / DSM 12829 / CIP 107037 / JCM 12360 / KCTC 9906 / NCIMB 13794 / A6) (Arthrobacter chlorophenolicus).